Here is a 470-residue protein sequence, read N- to C-terminus: UDP-N-acetylmuramate--L-alanine ligase (470 aa).

118-124 contacts ATP; that stretch reads GTHGKTT.

Belongs to the MurCDEF family.

Its subcellular location is the cytoplasm. It carries out the reaction UDP-N-acetyl-alpha-D-muramate + L-alanine + ATP = UDP-N-acetyl-alpha-D-muramoyl-L-alanine + ADP + phosphate + H(+). It participates in cell wall biogenesis; peptidoglycan biosynthesis. Functionally, cell wall formation. The chain is UDP-N-acetylmuramate--L-alanine ligase from Cereibacter sphaeroides (strain ATCC 17029 / ATH 2.4.9) (Rhodobacter sphaeroides).